Here is a 406-residue protein sequence, read N- to C-terminus: Probable 4-hydroxyphenylpyruvate dioxygenase 2 (406 aa).

VOC domains are found at residues 22 to 174 and 205 to 363; these read GFDH…LINR and EIDH…IFSK. Fe cation-binding residues include histidine 208, histidine 291, and glutamate 374.

This sequence belongs to the 4HPPD family. The cofactor is Fe cation.

It carries out the reaction 3-(4-hydroxyphenyl)pyruvate + O2 = homogentisate + CO2. The protein operates within amino-acid degradation; L-phenylalanine degradation; acetoacetate and fumarate from L-phenylalanine: step 3/6. The protein is Probable 4-hydroxyphenylpyruvate dioxygenase 2 of Aspergillus fumigatus (strain ATCC MYA-4609 / CBS 101355 / FGSC A1100 / Af293) (Neosartorya fumigata).